A 467-amino-acid polypeptide reads, in one-letter code: Protein PHOSPHATE STARVATION RESPONSE 3 (467 aa).

The segment at 227-266 is disordered; that stretch reads MSLPVSSCSDQEDLQDARSPAKVQLSSSRSSSGTASCNKP. Residues 262–322 enclose the HTH myb-type domain; the sequence is SCNKPRLRWT…HLQKYRLAKY (61 aa). The segment at residues 293–318 is a DNA-binding region (H-T-H motif); sequence PKGVLKLMKVEGLTIYHIKSHLQKYR. A compositionally biased stretch (basic and acidic residues) spans 327–337; that stretch reads KEDKKQEEKKT. Disordered stretches follow at residues 327 to 353 and 400 to 467; these read KEDKKQEEKKTKSVANGNDHAKKKSAQ and RESI…VHDE. Over residues 402 to 412 the composition is skewed to polar residues; sequence SISSMTSTTEG. Composition is skewed to basic and acidic residues over residues 419 to 428 and 438 to 467; these read PMEKTEDKAE and RITDTDAECHSKVDNKKTKPQADLEMVHDE.

As to expression, expressed in the root cap and in the exodermis of the root, in the root tip of lateral roots, in the mesophyll cells of the leaf, in pollen, vascular cylinder of the anther and the veins of the lemma, palea and pistils, and in the xylem and phloem regions of large vascular bundles, small vascular bundles and diffuse vascular bundles in node I.

The protein localises to the nucleus. Functionally, transcription factor involved in phosphate starvation signaling. Binds to P1BS, an imperfect palindromic sequence 5'-GNATATNC-3', to promote the expression of inorganic phosphate (Pi) starvation-responsive genes. Functionally redundant with PHR1 and PHR2 in regulating Pi starvation response and Pi homeostasis. The chain is Protein PHOSPHATE STARVATION RESPONSE 3 from Oryza sativa subsp. japonica (Rice).